Reading from the N-terminus, the 323-residue chain is tRNA(Ile)-lysidine synthase (323 aa).

33-38 contributes to the ATP binding site; the sequence is SGGPDS.

This sequence belongs to the tRNA(Ile)-lysidine synthase family.

The protein resides in the cytoplasm. The enzyme catalyses cytidine(34) in tRNA(Ile2) + L-lysine + ATP = lysidine(34) in tRNA(Ile2) + AMP + diphosphate + H(+). Functionally, ligates lysine onto the cytidine present at position 34 of the AUA codon-specific tRNA(Ile) that contains the anticodon CAU, in an ATP-dependent manner. Cytidine is converted to lysidine, thus changing the amino acid specificity of the tRNA from methionine to isoleucine. This chain is tRNA(Ile)-lysidine synthase, found in Mycobacterium bovis (strain ATCC BAA-935 / AF2122/97).